The primary structure comprises 338 residues: Putative peptide import ATP-binding protein BMEII0863 (338 aa).

One can recognise an ABC transporter domain in the interval 10-263; it reads KGLRTVFRTR…PRHPYTMGLL (254 aa). 43–50 is a binding site for ATP; that stretch reads GESGSGKS.

It belongs to the ABC transporter superfamily. In terms of assembly, the complex is composed of two ATP-binding proteins (BMEII0863 and BMEII0864), two transmembrane proteins (BMEII0860 and BMEII0861) and a solute-binding protein (BMEII0859).

It is found in the cell inner membrane. Functionally, probably part of an ABC transporter complex that could be involved in peptide import. Probably responsible for energy coupling to the transport system. The protein is Putative peptide import ATP-binding protein BMEII0863 of Brucella melitensis biotype 1 (strain ATCC 23456 / CCUG 17765 / NCTC 10094 / 16M).